The chain runs to 94 residues: Putative pterin-4-alpha-carbinolamine dehydratase (94 aa).

Belongs to the pterin-4-alpha-carbinolamine dehydratase family.

It carries out the reaction (4aS,6R)-4a-hydroxy-L-erythro-5,6,7,8-tetrahydrobiopterin = (6R)-L-erythro-6,7-dihydrobiopterin + H2O. The polypeptide is Putative pterin-4-alpha-carbinolamine dehydratase (Mycobacterium avium (strain 104)).